Reading from the N-terminus, the 500-residue chain is NF-kappa-B inhibitor epsilon (500 aa).

Basic and acidic residues predominate over residues 1 to 10 (MNQRRSESRP). 3 disordered regions span residues 1–66 (MNQR…PAWA), 84–215 (LSSL…YGSS), and 222–241 (SLLGGPEAEDPAPRLPLPHV). A phosphoserine mark is found at Ser157, Ser161, and Ser183. A compositionally biased stretch (low complexity) spans 161–186 (SLRSLRSLPESTSAPASGPSDGSPQP). Residues 196–209 (EPQEKEDADGERAD) are compositionally biased toward basic and acidic residues. ANK repeat units lie at residues 258–291 (DGDTLVHLAVIHEAPAVLLCCLALLPQEVLDIQN), 293–322 (LYQTALHLAVHLDQPGAVRALVLKGASRAL), 326–355 (HGDTALHVACQRQHLACARCLLEGRPEPGR), 369–398 (QGLACLHIATLQKNQPLMELLLRNGADIDV), 403–432 (SGKTALHLAVETQERGLVQFLLQAGAQVDA), and 436–465 (NGCTPLHLAAGRGLMGISSTLCKAGADSLL).

This sequence belongs to the NF-kappa-B inhibitor family. As to quaternary structure, interacts with RELA, REL, NFKB1 nuclear factor NF-kappa-B p50 subunit and NFKB2 nuclear factor NF-kappa-B p52 subunit. Interacts with HNRNPA2B1; the interaction may be mediated by the RRM2 domain of HNRNPA2B1, and HNRNPA2B1 may interact simultaneously with FAM76B and either NFKBIA or NFKBIE to form a complex. In terms of processing, serine phosphorylated; followed by proteasome-dependent degradation. Highly expressed in spleen, testis and lung, followed by kidney, pancreas, heart, placenta and brain. Also expressed in granulocytes and macrophages.

It localises to the cytoplasm. In terms of biological role, sequesters NF-kappa-B transcription factor complexes in the cytoplasm, thereby inhibiting their activity. Sequestered complexes include NFKB1-RELA (p50-p65) and NFKB1-REL (p50-c-Rel) complexes. Limits B-cell activation in response to pathogens, and also plays an important role in B-cell development. The chain is NF-kappa-B inhibitor epsilon (NFKBIE) from Homo sapiens (Human).